A 367-amino-acid chain; its full sequence is Cytochrome-c peroxidase IdrP2 (367 aa).

An N-terminal signal peptide occupies residues 1-28; that stretch reads MTTHQSIRRLSRIAALVGLAFVAGTVAA. Cytochrome c domains are found at residues 47–157 and 200–345; these read DMVE…AMWQ and SQQK…EALS. Cys69, Cys72, His73, Cys215, Cys218, and His219 together coordinate heme c.

The iodate reductase (Idr) complex is composed of a molybdopterin-dependent iodate reductase (IdrA and IdrB subunits) and two associated peroxidases (IdrP1 and IdrP2). Heme c is required as a cofactor.

It localises to the periplasm. It carries out the reaction 2 Fe(II)-[cytochrome c] + H2O2 + 2 H(+) = 2 Fe(III)-[cytochrome c] + 2 H2O. In terms of biological role, involved in iodate respiration. May play a critical role in detoxification of inadvertent H(2)O(2) generated by the iodate reductase IdrA/IdrB. This Denitromonas iodatirespirans protein is Cytochrome-c peroxidase IdrP2.